The following is a 273-amino-acid chain: uncharacterized protein (273 aa).

A helical transmembrane segment spans residues 7-27 (LTLGICLVLLIILIVGYVIMT).

This sequence belongs to the staphylococcal tandem lipoprotein family.

The protein resides in the cell membrane. This is an uncharacterized protein from Staphylococcus aureus (strain MSSA476).